The primary structure comprises 344 residues: Uroporphyrinogen decarboxylase (344 aa).

Residues Arg27–Arg31, Phe46, Asp76, Tyr151, Ser206, and His319 each bind substrate.

Belongs to the uroporphyrinogen decarboxylase family. As to quaternary structure, homodimer.

The protein localises to the cytoplasm. The enzyme catalyses uroporphyrinogen III + 4 H(+) = coproporphyrinogen III + 4 CO2. Its pathway is porphyrin-containing compound metabolism; protoporphyrin-IX biosynthesis; coproporphyrinogen-III from 5-aminolevulinate: step 4/4. In terms of biological role, catalyzes the decarboxylation of four acetate groups of uroporphyrinogen-III to yield coproporphyrinogen-III. This Halalkalibacterium halodurans (strain ATCC BAA-125 / DSM 18197 / FERM 7344 / JCM 9153 / C-125) (Bacillus halodurans) protein is Uroporphyrinogen decarboxylase.